A 124-amino-acid polypeptide reads, in one-letter code: Small ribosomal subunit protein uS12 (124 aa).

Residues 1 to 30 (MPTIQQLVRKGRQDKVAKTKTAALKGSPQR) form a disordered region. Residue Asp-89 is modified to 3-methylthioaspartic acid. The disordered stretch occupies residues 102-124 (ADTQGVKNRKQARSRYGAKKEKS). The segment covering 108 to 118 (KNRKQARSRYG) has biased composition (basic residues).

Belongs to the universal ribosomal protein uS12 family. In terms of assembly, part of the 30S ribosomal subunit. Contacts proteins S8 and S17. May interact with IF1 in the 30S initiation complex.

With S4 and S5 plays an important role in translational accuracy. Its function is as follows. Interacts with and stabilizes bases of the 16S rRNA that are involved in tRNA selection in the A site and with the mRNA backbone. Located at the interface of the 30S and 50S subunits, it traverses the body of the 30S subunit contacting proteins on the other side and probably holding the rRNA structure together. The combined cluster of proteins S8, S12 and S17 appears to hold together the shoulder and platform of the 30S subunit. In Saccharopolyspora erythraea (strain ATCC 11635 / DSM 40517 / JCM 4748 / NBRC 13426 / NCIMB 8594 / NRRL 2338), this protein is Small ribosomal subunit protein uS12.